Consider the following 441-residue polypeptide: Protein eva-1 homolog C (441 aa).

Positions 1-23 (MLLPGPARQPPTPQPVQHPGLRR) are disordered. Positions 1 to 48 (MLLPGPARQPPTPQPVQHPGLRRQVEPPGQLLRLFYCTVLVCSKEISA) are cleaved as a signal peptide. Residues 7 to 16 (ARQPPTPQPV) show a composition bias toward pro residues. The Extracellular segment spans residues 49 to 322 (LTDFSGYLTK…AYIRAHPERA (274 aa)). An N-linked (GlcNAc...) asparagine glycan is attached at asparagine 62. Positions 67 to 159 (ACDGDYLNLQ…KYLLVSFKCQ (93 aa)) constitute an SUEL-type lectin 1 domain. An N-linked (GlcNAc...) asparagine glycan is attached at asparagine 165. The region spanning 168–260 (VCEDQELKLH…KYLTVTYACV (93 aa)) is the SUEL-type lectin 2 domain. Residues 323-343 (ALLFVSSVCIGLALTLCALVI) traverse the membrane as a helical segment. Over 344–441 (RESCAKDFRD…SLPRNMGQFY (98 aa)) the chain is Cytoplasmic. The segment at 362 to 391 (VPGSDKVEEDSEDEEEEEDSSESDFPGELS) is disordered. The segment covering 368–383 (VEEDSEDEEEEEDSSE) has biased composition (acidic residues).

This sequence belongs to the EVA1 family.

It localises to the cell membrane. Functionally, binds heparin. The chain is Protein eva-1 homolog C (EVA1C) from Pan troglodytes (Chimpanzee).